Here is a 264-residue protein sequence, read N- to C-terminus: JmjC domain-containing protein 8 (264 aa).

The first 23 residues, 1–23 (MAPASRLLALWALAAVALPGSGA), serve as a signal peptide directing secretion. 3 N-linked (GlcNAc...) asparagine glycosylation sites follow: N130, N140, and N209. The 134-residue stretch at 131 to 264 (DTLYFFGDNN…TSVFISTFLG (134 aa)) folds into the JmjC domain.

As to quaternary structure, oligomer. Dimer. Interacts with PKM; regulates angiogenesis and metabolism. Post-translationally, N-glycosylated.

It localises to the endoplasmic reticulum lumen. It is found in the cytoplasm. Its function is as follows. Functions as a positive regulator of TNF-induced NF-kappa-B signaling. Regulates angiogenesis and cellular metabolism through interaction with PKM. This chain is JmjC domain-containing protein 8, found in Homo sapiens (Human).